Reading from the N-terminus, the 235-residue chain is Ribonuclease PH (235 aa).

Phosphate-binding positions include Arg86 and 124–126; that span reads GTR.

Belongs to the RNase PH family. As to quaternary structure, homohexameric ring arranged as a trimer of dimers.

The catalysed reaction is tRNA(n+1) + phosphate = tRNA(n) + a ribonucleoside 5'-diphosphate. Its function is as follows. Phosphorolytic 3'-5' exoribonuclease that plays an important role in tRNA 3'-end maturation. Removes nucleotide residues following the 3'-CCA terminus of tRNAs; can also add nucleotides to the ends of RNA molecules by using nucleoside diphosphates as substrates, but this may not be physiologically important. Probably plays a role in initiation of 16S rRNA degradation (leading to ribosome degradation) during starvation. The chain is Ribonuclease PH from Francisella tularensis subsp. mediasiatica (strain FSC147).